The sequence spans 245 residues: MDNLLRHLKISKEQITPVVLVVGDPGRVDKIKVVCDSYVDLAYNREYKSVECHYKGQKFLCVSHGVGSAGCAVCFEELCQNGAKVIIRAGSCGSLQPDLIKRGDICICNAAVREDRVSHLLIHGDFPAVGDFDVYDTLNKCAQELNVPVFNGISVSSDMYYPNKIIPSRLEDYSKANAAVVEMELATLMVIGTLRKVKTGGILIVDGCPFKWDEGDFDNNLVPHQLENMIKIALGACAKLATKYA.

Residue His-7 coordinates a purine D-ribonucleoside. Phosphate-binding positions include 23–27 (GDPGR), Arg-45, and 88–91 (RAGS). An a purine D-ribonucleoside-binding site is contributed by 183–184 (ME). Asp-206 acts as the Proton donor in catalysis.

It belongs to the PNP/MTAP phosphorylase family. As to quaternary structure, homohexamer; trimer of homodimers.

It carries out the reaction inosine + phosphate = alpha-D-ribose 1-phosphate + hypoxanthine. It catalyses the reaction guanosine + phosphate = alpha-D-ribose 1-phosphate + guanine. The catalysed reaction is 2'-deoxyguanosine + phosphate = 2-deoxy-alpha-D-ribose 1-phosphate + guanine. The enzyme catalyses 2'-deoxyinosine + phosphate = 2-deoxy-alpha-D-ribose 1-phosphate + hypoxanthine. It carries out the reaction S-methyl-5'-thioinosine + phosphate = 5-(methylsulfanyl)-alpha-D-ribose 1-phosphate + hypoxanthine. The protein operates within purine metabolism; purine nucleoside salvage. Inhibited by Immucillin-H and 5'-methylthio-Immucillin-H. Inhibited by 5'-deaza-1'-aza-2c-deoxy-1'-(9-methylene)-Immucilin-G (DADMe-ImmG). Functionally, as part of the purine salvage pathway, catalyzes the phosphorolytic breakdown of the N-glycosidic bond in the beta-(deoxy)ribonucleoside molecules, with the formation of the corresponding free purine bases and pentose-1-phosphate. Preferentially acts on inosine and guanosine, and to a lesser extent on 2'-deoxyguanosine and guanosine. Also catalyzes the phosphorylation of S-methyl-5'-thioinosine (MTI) to hypoxanthine; MTI is produced by adenosine deaminase (ADA)-mediated breakdown of S-methyl-5'-thioadenosine (MTA), a major by-product of polyamine biosynthesis. Generates hypoxanthine from both the purine salvage pathway and from polyamine metabolism which is required for nucleic acids synthesis. Has no activity towards adenosine. This chain is Purine nucleoside phosphorylase, found in Plasmodium falciparum (isolate 3D7).